A 245-amino-acid chain; its full sequence is Phycocyanobilin:ferredoxin oxidoreductase (245 aa).

It belongs to the HY2 family.

It carries out the reaction (2R,3Z)-phycocyanobilin + 4 oxidized [2Fe-2S]-[ferredoxin] = biliverdin IXalpha + 4 reduced [2Fe-2S]-[ferredoxin] + 4 H(+). Its function is as follows. Catalyzes the four-electron reduction of biliverdin IX-alpha (2-electron reduction at both the A and D rings); the reaction proceeds via an isolatable 2-electron intermediate, 181,182-dihydrobiliverdin. This chain is Phycocyanobilin:ferredoxin oxidoreductase, found in Rippkaea orientalis (strain PCC 8801 / RF-1) (Cyanothece sp. (strain PCC 8801)).